Here is a 937-residue protein sequence, read N- to C-terminus: Aconitate hydratase A (937 aa).

Residues 410 to 450 (MANEGGFQPGSTSDLDNYNASWPGEGESAAANAEGRPSNPV) form a disordered region. Polar residues predominate over residues 418-429 (PGSTSDLDNYNA). Residues 433–444 (GEGESAAANAEG) are compositionally biased toward low complexity. [4Fe-4S] cluster-binding residues include Cys475, Cys541, and Cys544.

Belongs to the aconitase/IPM isomerase family. Monomer. Requires [4Fe-4S] cluster as cofactor.

It catalyses the reaction citrate = D-threo-isocitrate. The enzyme catalyses (2S,3R)-3-hydroxybutane-1,2,3-tricarboxylate = 2-methyl-cis-aconitate + H2O. Its pathway is carbohydrate metabolism; tricarboxylic acid cycle; isocitrate from oxaloacetate: step 2/2. It participates in organic acid metabolism; propanoate degradation. In terms of biological role, involved in the catabolism of short chain fatty acids (SCFA) via the tricarboxylic acid (TCA)(acetyl degradation route) and probably via the 2-methylcitrate cycle I (propionate degradation route). Catalyzes the reversible isomerization of citrate to isocitrate via cis-aconitate. Could catalyze the hydration of 2-methyl-cis-aconitate to yield (2R,3S)-2-methylisocitrate. The apo form of AcnA functions as a RNA-binding regulatory protein. In Corynebacterium efficiens (strain DSM 44549 / YS-314 / AJ 12310 / JCM 11189 / NBRC 100395), this protein is Aconitate hydratase A (acn).